A 325-amino-acid chain; its full sequence is Tetraacyldisaccharide 4'-kinase (325 aa).

55 to 62 (TAGGNGKT) provides a ligand contact to ATP.

Belongs to the LpxK family.

It carries out the reaction a lipid A disaccharide + ATP = a lipid IVA + ADP + H(+). It participates in glycolipid biosynthesis; lipid IV(A) biosynthesis; lipid IV(A) from (3R)-3-hydroxytetradecanoyl-[acyl-carrier-protein] and UDP-N-acetyl-alpha-D-glucosamine: step 6/6. Functionally, transfers the gamma-phosphate of ATP to the 4'-position of a tetraacyldisaccharide 1-phosphate intermediate (termed DS-1-P) to form tetraacyldisaccharide 1,4'-bis-phosphate (lipid IVA). In Salmonella newport (strain SL254), this protein is Tetraacyldisaccharide 4'-kinase.